A 181-amino-acid chain; its full sequence is Adenylate kinase (181 aa).

ATP is bound at residue Gly10 to Thr15. Positions Ser30 to Val59 are NMP. AMP-binding positions include Thr31, Arg36, Asp57–Val59, Gly85–Arg88, and Gln92. Residues Gly126–Asp132 are LID. Arg127 is an ATP binding site. AMP is bound by residues Arg129 and Arg140. Residue Gly166 coordinates ATP.

It belongs to the adenylate kinase family. In terms of assembly, monomer.

Its subcellular location is the cytoplasm. The enzyme catalyses AMP + ATP = 2 ADP. Its pathway is purine metabolism; AMP biosynthesis via salvage pathway; AMP from ADP: step 1/1. Catalyzes the reversible transfer of the terminal phosphate group between ATP and AMP. Plays an important role in cellular energy homeostasis and in adenine nucleotide metabolism. The chain is Adenylate kinase from Mycolicibacterium smegmatis (strain ATCC 700084 / mc(2)155) (Mycobacterium smegmatis).